A 329-amino-acid polypeptide reads, in one-letter code: Protein-arginine N-acetylglucosaminyltransferase NleB (329 aa).

An N-beta-linked (GlcNAc) arginine; by autocatalysis glycan is attached at R13. 48 to 50 is a binding site for UDP-N-acetyl-alpha-D-glucosamine; that stretch reads QWF. An N-beta-linked (GlcNAc) arginine; by autocatalysis glycan is attached at R53. Y72 is a UDP-N-acetyl-alpha-D-glucosamine binding site. R159 is a glycosylation site (N-beta-linked (GlcNAc) arginine; by autocatalysis). Residue 219–222 coordinates UDP-N-acetyl-alpha-D-glucosamine; the sequence is YLDA. The short motif at 221–223 is the DXD motif element; the sequence is DAD. D223 serves as a coordination point for Mn(2+). The Proton acceptor role is filled by E253. N-beta-linked (GlcNAc) arginine; by autocatalysis glycosylation is present at R293. Residues N320 and S322 each contribute to the Mn(2+) site. Residues S322 and 327 to 329 contribute to the UDP-N-acetyl-alpha-D-glucosamine site; that span reads SSW.

It belongs to the glycosyltransferase NleB family. Requires Mn(2+) as cofactor. Post-translationally, auto-glycosylated: arginine GlcNAcylation is required for activity toward death domain-containing host target proteins.

It localises to the secreted. It is found in the host cell. It catalyses the reaction L-arginyl-[protein] + UDP-N-acetyl-alpha-D-glucosamine = N(omega)-(N-acetyl-beta-D-glucosaminyl)-L-arginyl-[protein] + UDP + H(+). Its function is as follows. Protein-arginine N-acetylglucosaminyltransferase effector that disrupts TNF signaling in infected cells, including NF-kappa-B signaling, apoptosis and necroptosis. Acts by catalyzing the transfer of a single N-acetylglucosamine (GlcNAc) to a conserved arginine residue in the death domain of host proteins FADD, TNFRSF1A and RIPK1: arginine GlcNAcylation prevents homotypic/heterotypic death domain interactions and assembly of the oligomeric TNF-alpha receptor complex, thereby disrupting TNF signaling. Has preference for host FADD as substrate compared to TNFRSF1A and RIPK1. Also acts on host proteins without a death domain: catalyzes GlcNAcylation of host GAPDH protein, thereby preventing GAPDH interaction with TRAF2 and TRAF3, leading to inhibit NF-kappa-B signaling and type I interferon production, respectively. Also displays intra-bacterial activity by mediating GlcNAcylation of glutathione synthetase GshB. Catalyzes auto-GlcNAcylation, which is required for activity toward death domain-containing host target proteins. The sequence is that of Protein-arginine N-acetylglucosaminyltransferase NleB from Citrobacter rodentium.